The primary structure comprises 292 residues: Phosphatidylglycerol--prolipoprotein diacylglyceryl transferase (292 aa).

Helical transmembrane passes span 18 to 38 (LFGV…GLLI), 67 to 87 (LLTW…VLFY), and 105 to 125 (GGMS…AFCL). A 1,2-diacyl-sn-glycero-3-phospho-(1'-sn-glycerol) is bound at residue Arg-150. Transmembrane regions (helical) follow at residues 193-213 (QIYE…LLVW), 222-242 (GSVS…VEFV), and 266-286 (GLTM…YLIL).

Belongs to the Lgt family.

The protein resides in the cell inner membrane. The enzyme catalyses L-cysteinyl-[prolipoprotein] + a 1,2-diacyl-sn-glycero-3-phospho-(1'-sn-glycerol) = an S-1,2-diacyl-sn-glyceryl-L-cysteinyl-[prolipoprotein] + sn-glycerol 1-phosphate + H(+). Its pathway is protein modification; lipoprotein biosynthesis (diacylglyceryl transfer). Catalyzes the transfer of the diacylglyceryl group from phosphatidylglycerol to the sulfhydryl group of the N-terminal cysteine of a prolipoprotein, the first step in the formation of mature lipoproteins. The sequence is that of Phosphatidylglycerol--prolipoprotein diacylglyceryl transferase from Cereibacter sphaeroides (strain ATCC 17023 / DSM 158 / JCM 6121 / CCUG 31486 / LMG 2827 / NBRC 12203 / NCIMB 8253 / ATH 2.4.1.) (Rhodobacter sphaeroides).